The sequence spans 238 residues: Ribose-5-phosphate isomerase A (238 aa).

Substrate is bound by residues 30–33 (SGST), 87–90 (DGAD), and 100–103 (KGGG). Glu-109 serves as the catalytic Proton acceptor. Position 127 (Lys-127) interacts with substrate.

The protein belongs to the ribose 5-phosphate isomerase family. In terms of assembly, homodimer.

The enzyme catalyses aldehydo-D-ribose 5-phosphate = D-ribulose 5-phosphate. Its pathway is carbohydrate degradation; pentose phosphate pathway; D-ribose 5-phosphate from D-ribulose 5-phosphate (non-oxidative stage): step 1/1. Functionally, catalyzes the reversible conversion of ribose-5-phosphate to ribulose 5-phosphate. The polypeptide is Ribose-5-phosphate isomerase A (Synechococcus sp. (strain CC9311)).